Consider the following 138-residue polypeptide: ATP synthase epsilon chain (138 aa).

The protein belongs to the ATPase epsilon chain family. In terms of assembly, F-type ATPases have 2 components, CF(1) - the catalytic core - and CF(0) - the membrane proton channel. CF(1) has five subunits: alpha(3), beta(3), gamma(1), delta(1), epsilon(1). CF(0) has three main subunits: a, b and c.

It is found in the cell inner membrane. Produces ATP from ADP in the presence of a proton gradient across the membrane. This Geotalea daltonii (strain DSM 22248 / JCM 15807 / FRC-32) (Geobacter daltonii) protein is ATP synthase epsilon chain.